The following is a 70-amino-acid chain: Large ribosomal subunit protein bL31 (70 aa).

4 residues coordinate Zn(2+): Cys16, Cys18, Cys37, and Cys40. The tract at residues 48-70 is disordered; it reads QRQASSGGRVDKFNKRFGALGSK.

This sequence belongs to the bacterial ribosomal protein bL31 family. Type A subfamily. Part of the 50S ribosomal subunit. It depends on Zn(2+) as a cofactor.

Its function is as follows. Binds the 23S rRNA. This is Large ribosomal subunit protein bL31 from Photobacterium profundum (strain SS9).